Here is a 68-residue protein sequence, read N- to C-terminus: DNA-directed RNA polymerase subunit omega (68 aa).

Belongs to the RNA polymerase subunit omega family. In terms of assembly, the RNAP catalytic core consists of 2 alpha, 1 beta, 1 beta' and 1 omega subunit. When a sigma factor is associated with the core the holoenzyme is formed, which can initiate transcription.

It carries out the reaction RNA(n) + a ribonucleoside 5'-triphosphate = RNA(n+1) + diphosphate. In terms of biological role, promotes RNA polymerase assembly. Latches the N- and C-terminal regions of the beta' subunit thereby facilitating its interaction with the beta and alpha subunits. In Neisseria meningitidis serogroup C (strain 053442), this protein is DNA-directed RNA polymerase subunit omega.